The sequence spans 355 residues: 3-dehydroquinate synthase (355 aa).

Residues 106–110 (GVVGD), 130–131 (TS), Lys143, and Lys152 contribute to the NAD(+) site. Zn(2+)-binding residues include Glu185, His246, and His262.

Belongs to the sugar phosphate cyclases superfamily. Dehydroquinate synthase family. It depends on Co(2+) as a cofactor. Zn(2+) is required as a cofactor. NAD(+) serves as cofactor.

The protein localises to the cytoplasm. It catalyses the reaction 7-phospho-2-dehydro-3-deoxy-D-arabino-heptonate = 3-dehydroquinate + phosphate. It functions in the pathway metabolic intermediate biosynthesis; chorismate biosynthesis; chorismate from D-erythrose 4-phosphate and phosphoenolpyruvate: step 2/7. Catalyzes the conversion of 3-deoxy-D-arabino-heptulosonate 7-phosphate (DAHP) to dehydroquinate (DHQ). This chain is 3-dehydroquinate synthase, found in Latilactobacillus sakei subsp. sakei (strain 23K) (Lactobacillus sakei subsp. sakei).